The sequence spans 493 residues: MFKFALALTLCLAGSLSLAQHNPHWWGNRNTIVHLFEWKWSDIAEECESFLGPRGFAGVQVSPVNENIISAGRPWWERYQPISYKLTTRSGNEEEFGDMVRRCNEVGVRIYVDVLLNHMSGDFDGVAIGTAGTEAEPSKKSFPGVPFSAQDFPPSCEITDWNNRFQVQQCELVGLKDLDQSSDWVRSKLIEFLDHLIELGVAGFRVDAAKHMASEDLEYIYRSLSDLNTDHGFPHNARPFIFQEVIDHGHETVSRDEYKDLGAVTEFRFSEEIGNAFRGNNALRWLQSWGTGWGFLPSGQALTFVDNHDNQRDAGAVLNYKSPRQYKMATAFHLAYPYGISRVMSSFAFDDHDTPPPQDAQERIISPEFDEDGACVNGWICEHRWRQIYAMVGFKNAVRDTEMAEWWDNGDSQISFCRGNKGFLAVNNNQYDLSQELNTCLPAGEYCDVISGSLINGSCTGKSVTVKDNGYGYIHIGVDDFDGMMALHVDAKV.

An N-terminal signal peptide occupies residues 1–19 (MFKFALALTLCLAGSLSLA). Gln20 is subject to Pyrrolidone carboxylic acid. An intrachain disulfide couples Cys47 to Cys103. Residues Asn117, Gln168, and Asp177 each contribute to the Ca(2+) site. The cysteines at positions 156 and 170 are disulfide-linked. Arg205 is a chloride binding site. Asp207 functions as the Nucleophile in the catalytic mechanism. His211 serves as a coordination point for Ca(2+). Glu244 acts as the Proton donor in catalysis. Chloride-binding residues include Asn307 and Arg342. 3 disulfides stabilise this stretch: Cys375-Cys381, Cys417-Cys440, and Cys447-Cys459.

Belongs to the glycosyl hydrolase 13 family. As to quaternary structure, monomer. Requires Ca(2+) as cofactor. Chloride is required as a cofactor.

The protein localises to the secreted. It carries out the reaction Endohydrolysis of (1-&gt;4)-alpha-D-glucosidic linkages in polysaccharides containing three or more (1-&gt;4)-alpha-linked D-glucose units.. The protein is Alpha-amylase-related protein (Amyrel) of Drosophila elegans (Fruit fly).